The sequence spans 91 residues: Small ribosomal subunit protein bS16 (91 aa).

This sequence belongs to the bacterial ribosomal protein bS16 family.

The polypeptide is Small ribosomal subunit protein bS16 (Latilactobacillus sakei subsp. sakei (strain 23K) (Lactobacillus sakei subsp. sakei)).